Here is a 173-residue protein sequence, read N- to C-terminus: Shikimate kinase (173 aa).

An ATP-binding site is contributed by 14-19 (GAGKST). S18 serves as a coordination point for Mg(2+). Residues D36, R60, and G82 each contribute to the substrate site. R120 provides a ligand contact to ATP. R139 is a substrate binding site. Q156 provides a ligand contact to ATP.

Belongs to the shikimate kinase family. In terms of assembly, monomer. Requires Mg(2+) as cofactor.

The protein resides in the cytoplasm. It carries out the reaction shikimate + ATP = 3-phosphoshikimate + ADP + H(+). It participates in metabolic intermediate biosynthesis; chorismate biosynthesis; chorismate from D-erythrose 4-phosphate and phosphoenolpyruvate: step 5/7. In terms of biological role, catalyzes the specific phosphorylation of the 3-hydroxyl group of shikimic acid using ATP as a cosubstrate. The protein is Shikimate kinase of Actinobacillus pleuropneumoniae serotype 5b (strain L20).